Reading from the N-terminus, the 567-residue chain is Thiol:disulfide interchange protein DsbD (567 aa).

A signal peptide spans 1 to 19 (MAQRIFTLILLLCSTSAFA). 2 cysteine pairs are disulfide-bonded: Cys-122–Cys-128 and Cys-185–Cys-307. A run of 8 helical transmembrane segments spans residues 166–186 (LPFSALWALLIGIGIAFTPCV), 210–230 (LLLAFIYVQGMALTYTALGLV), 246–266 (YVLIGLAIVFTLLALSMFGLF), 299–319 (IAGLICSPCTTAPLSAILLYI), 326–346 (WLGGGTLYLYALGMGLPLMLV), 360–380 (WMAHVKTAFGFVILALPVFLL), 387–407 (AWGLRLWSLLGVAFFGWAFIT), and 418–438 (IVQIILLAAALISVRPLQDWA). In terms of domain architecture, Thioredoxin spans 435–567 (QDWAFGSPSA…FSAHLHDRQP (133 aa)). Cys-482 and Cys-485 form a disulfide bridge.

The protein belongs to the thioredoxin family. DsbD subfamily.

Its subcellular location is the cell inner membrane. The catalysed reaction is [protein]-dithiol + NAD(+) = [protein]-disulfide + NADH + H(+). It carries out the reaction [protein]-dithiol + NADP(+) = [protein]-disulfide + NADPH + H(+). In terms of biological role, required to facilitate the formation of correct disulfide bonds in some periplasmic proteins and for the assembly of the periplasmic c-type cytochromes. Acts by transferring electrons from cytoplasmic thioredoxin to the periplasm. This transfer involves a cascade of disulfide bond formation and reduction steps. In Salmonella choleraesuis (strain SC-B67), this protein is Thiol:disulfide interchange protein DsbD.